A 233-amino-acid chain; its full sequence is Ciliary microtubule inner protein 6 (233 aa).

Basic and acidic residues-rich tracts occupy residues 1-14 (MEGE…KTED) and 21-33 (AERK…EKSP). The disordered stretch occupies residues 1 to 45 (MEGEEKQQQHKTEDDGIACVAERKVEIKNEKSPGKSTQHPKPCVD). The tract at residues 127-159 (GIVPLTSLDVSGEHENNFVEYISFIHQYDARRT) is mn. The disordered stretch occupies residues 192–233 (LLNTLESGSSEQPQKTDKGNSSGDKVTSPGLCQQNSQELLET). The segment covering 195 to 233 (TLESGSSEQPQKTDKGNSSGDKVTSPGLCQQNSQELLET) has biased composition (polar residues).

It is found in the cell projection. Its subcellular location is the cilium. The sequence is that of Ciliary microtubule inner protein 6 (Cimip6) from Mus musculus (Mouse).